The primary structure comprises 625 residues: Probable potassium transport system protein Kup (625 aa).

A run of 12 helical transmembrane segments spans residues 10 to 30 (LAALTLAAVGIVYGDIGTSPL), 50 to 70 (LLGVVSLIVWGLIIIVSLKYV), 102 to 122 (YFPLMVMGLFGATLFYGDSVI), 135 to 155 (LGVATSAFDPYVVPVTVAILV), 172 to 192 (FGPVMLIWFITLAVMGVVNII), 214 to 234 (GFLAFIALGAVVLAFTGAEAL), 251 to 271 (FLIAFPALSLNYLGQGALLLL), 284 to 304 (LGAWSIYPLVALSTMAAIIAS), 340 to 360 (IYIPAVNWLQMIVVVLAVIGF), 369 to 389 (AYGIAVTATMMVTTVLTFFVI), 397 to 417 (LILCVAATGFFLVIDLSLFSA), and 422 to 442 (LFHGGWFPLLLGVVLFTLMLT).

It belongs to the HAK/KUP transporter (TC 2.A.72) family.

It localises to the cell inner membrane. It carries out the reaction K(+)(in) + H(+)(in) = K(+)(out) + H(+)(out). Transport of potassium into the cell. Likely operates as a K(+):H(+) symporter. This Herminiimonas arsenicoxydans protein is Probable potassium transport system protein Kup.